The sequence spans 191 residues: NF-kappa-B inhibitor-interacting Ras-like protein 2 (191 aa).

Residues 1 to 191 (MGKSCKVVVC…KNKGSGSLDG (191 aa)) are small GTPase-like. 11 to 18 (GQASVGKT) is a binding site for GTP. The Effector region motif lies at 35 to 43 (MIETQEDIY). GTP is bound by residues 61 to 65 (DTRGL) and 120 to 123 (NKCD). The interval 169-191 (TQPQSKSAFPLSRKNKGSGSLDG) is disordered.

Belongs to the small GTPase superfamily. Ras family. KappaB-Ras subfamily. As to quaternary structure, interacts with both NF-kappa-B inhibitor alpha (NFKBIA) and beta (NFKBIB) in vitro. However, it probably only interacts with NFKBIB in vivo. Interacts with GFOD1. In terms of tissue distribution, widely expressed.

The protein resides in the cytoplasm. Atypical Ras-like protein that acts as a potent regulator of NF-kappa-B activity by preventing the degradation of NF-kappa-B inhibitor beta (NFKBIB) by most signals, explaining why NFKBIB is more resistant to degradation. May act by blocking phosphorylation of NFKBIB and nuclear localization of p65/RELA NF-kappa-B subunit. It is unclear whether it acts as a GTPase. Both GTP- and GDP-bound forms block phosphorylation of NFKBIB. This chain is NF-kappa-B inhibitor-interacting Ras-like protein 2 (NKIRAS2), found in Homo sapiens (Human).